A 630-amino-acid polypeptide reads, in one-letter code: Mannosyl-oligosaccharide 1,2-alpha-mannosidase IC (630 aa).

Topologically, residues 1–22 are cytoplasmic; that stretch reads MLMRKVPGFVPASPWGLRLPQK. A helical; Signal-anchor for type II membrane protein transmembrane segment spans residues 23 to 43; sequence FLFLLFLSGLVTLCFGALFLL. The Lumenal portion of the chain corresponds to 44-630; it reads PHSSRLKRLF…DSSGRAWGRH (587 aa). A disordered region spans residues 74-140; sequence PAREQEPPPN…ASRPGDEGVP (67 aa). Positions 80 to 89 are enriched in pro residues; that stretch reads PPPNPAPAAP. Positions 102–113 are enriched in basic residues; it reads PRRRKGGLRRTR. Residue S164 is modified to Phosphoserine. N250 is a glycosylation site (N-linked (GlcNAc...) asparagine). A disulfide bridge links C453 with C485. Residue E499 is the Proton donor of the active site. T610 contacts Ca(2+). N-linked (GlcNAc...) asparagine glycosylation is present at N618.

Belongs to the glycosyl hydrolase 47 family. The cofactor is Ca(2+). As to expression, expressed in most tissues with the exception of lung, muscle and pancreas. Highly expressed in placenta.

The protein localises to the golgi apparatus membrane. It carries out the reaction N(4)-(alpha-D-Man-(1-&gt;2)-alpha-D-Man-(1-&gt;2)-alpha-D-Man-(1-&gt;3)-[alpha-D-Man-(1-&gt;2)-alpha-D-Man-(1-&gt;3)-[alpha-D-Man-(1-&gt;2)-alpha-D-Man-(1-&gt;6)]-alpha-D-Man-(1-&gt;6)]-beta-D-Man-(1-&gt;4)-beta-D-GlcNAc-(1-&gt;4)-beta-D-GlcNAc)-L-asparaginyl-[protein] (N-glucan mannose isomer 9A1,2,3B1,2,3) + 4 H2O = N(4)-(alpha-D-Man-(1-&gt;3)-[alpha-D-Man-(1-&gt;3)-[alpha-D-Man-(1-&gt;6)]-alpha-D-Man-(1-&gt;6)]-beta-D-Man-(1-&gt;4)-beta-D-GlcNAc-(1-&gt;4)-beta-D-GlcNAc)-L-asparaginyl-[protein] (N-glucan mannose isomer 5A1,2) + 4 beta-D-mannose. The catalysed reaction is N(4)-(alpha-D-Man-(1-&gt;2)-alpha-D-Man-(1-&gt;2)-alpha-D-Man-(1-&gt;3)-[alpha-D-Man-(1-&gt;3)-[alpha-D-Man-(1-&gt;2)-alpha-D-Man-(1-&gt;6)]-alpha-D-Man-(1-&gt;6)]-beta-D-Man-(1-&gt;4)-beta-D-GlcNAc-(1-&gt;4)-beta-D-GlcNAc)-L-asparaginyl-[protein] (N-glucan mannose isomer 8A1,2,3B1,3) + 3 H2O = N(4)-(alpha-D-Man-(1-&gt;3)-[alpha-D-Man-(1-&gt;3)-[alpha-D-Man-(1-&gt;6)]-alpha-D-Man-(1-&gt;6)]-beta-D-Man-(1-&gt;4)-beta-D-GlcNAc-(1-&gt;4)-beta-D-GlcNAc)-L-asparaginyl-[protein] (N-glucan mannose isomer 5A1,2) + 3 beta-D-mannose. The protein operates within protein modification; protein glycosylation. Inhibited by both 1-deoxymannojirimycin and kifunensine. In terms of biological role, involved in the maturation of Asn-linked oligosaccharides. Trim alpha-1,2-linked mannose residues from Man(9)GlcNAc(2) to produce first Man(8)GlcNAc(2) then Man(6)GlcNAc and a small amount of Man(5)GlcNAc. The protein is Mannosyl-oligosaccharide 1,2-alpha-mannosidase IC (MAN1C1) of Homo sapiens (Human).